We begin with the raw amino-acid sequence, 319 residues long: Malate dehydrogenase (319 aa).

Residues 11-16 (GAGNVG) and Asp36 each bind NAD(+). Substrate is bound by residues Arg85 and Arg91. NAD(+)-binding positions include Asn98 and 121–123 (VSN). Substrate is bound by residues Asn123 and Arg154. The Proton acceptor role is filled by His178.

This sequence belongs to the LDH/MDH superfamily. MDH type 3 family.

It carries out the reaction (S)-malate + NAD(+) = oxaloacetate + NADH + H(+). Its function is as follows. Catalyzes the reversible oxidation of malate to oxaloacetate. The sequence is that of Malate dehydrogenase from Sulfurimonas denitrificans (strain ATCC 33889 / DSM 1251) (Thiomicrospira denitrificans (strain ATCC 33889 / DSM 1251)).